We begin with the raw amino-acid sequence, 205 residues long: ATP synthase subunit b (205 aa).

A signal peptide spans 1 to 27 (MKLNKKHLVAILSVLSLSIIVVPLLTS). Cysteine 28 carries N-palmitoyl cysteine lipidation. Cysteine 28 carries S-diacylglycerol cysteine lipidation. Residues 48–68 (VWVFIAQVIAMCVVFSLVLWL) traverse the membrane as a helical segment.

This sequence belongs to the ATPase B chain family. In terms of assembly, F-type ATPases have 2 components, F(1) - the catalytic core - and F(0) - the membrane proton channel. F(1) has five subunits: alpha(3), beta(3), gamma(1), delta(1), epsilon(1). F(0) has three main subunits: a(1), b(2) and c(10-14). The alpha and beta chains form an alternating ring which encloses part of the gamma chain. F(1) is attached to F(0) by a central stalk formed by the gamma and epsilon chains, while a peripheral stalk is formed by the delta and b chains.

Its subcellular location is the cell membrane. Its function is as follows. F(1)F(0) ATP synthase produces ATP from ADP in the presence of a proton or sodium gradient. F-type ATPases consist of two structural domains, F(1) containing the extramembraneous catalytic core and F(0) containing the membrane proton channel, linked together by a central stalk and a peripheral stalk. During catalysis, ATP synthesis in the catalytic domain of F(1) is coupled via a rotary mechanism of the central stalk subunits to proton translocation. In terms of biological role, component of the F(0) channel, it forms part of the peripheral stalk, linking F(1) to F(0). In Ureaplasma parvum serovar 3 (strain ATCC 27815 / 27 / NCTC 11736), this protein is ATP synthase subunit b.